The primary structure comprises 61 residues: [Val1,Thr6]-bradykinyl-Gln,Ser (61 aa).

Residues 1–22 (MSILKKSLFLVLFLGLVSFSIC) form the signal peptide. The propeptide occupies 23 to 50 (EEEKREAEEEENEDEIEEQSEEKKRFEP). A disordered region spans residues 25-61 (EKREAEEEENEDEIEEQSEEKKRFEPVPPGFTPFRQS). Acidic residues predominate over residues 30-42 (EEEENEDEIEEQS). A 4-hydroxyproline; in form [Val1,Hyp2,Thr6]-Bradykinyl-Gln,Ser and [Val1,Hyp2,Thr6]-Bradykinin modification is found at Pro52.

Belongs to the frog skin active peptide (FSAP) family. Bradykinin-related peptide subfamily. As to expression, expressed by the skin glands.

The protein localises to the secreted. Induces contraction of rat ileum smooth muscle (EC(50)=2.73 uM) but has no activity towards smooth muscle from tail artery, urinary bladder or uterus up to concentrations of 100 uM. Binds to both bradykinin receptor B1 (BDKRB1) and B2 (BDKRB2); the effect via BDKRB1 is stronger. Functionally, [Val1,Hyp2,Thr6]-bradykinin-Gln,Ser: Induces contraction of rat ileum smooth muscle (EC(50)=710 nM) but has no activity towards smooth muscle from tail artery, urinary bladder or uterus up to concentrations of 100 uM. Binds to both bradykinin receptor B1 (BDKRB1) and B2 (BDKRB2); the effect via BDKRB1 is stronger. Induces contraction of guinea pig ileum smooth muscle. The protein is [Val1,Thr6]-bradykinyl-Gln,Ser of Pithecopus hypochondrialis (Orange-legged leaf frog).